A 358-amino-acid chain; its full sequence is Protein IncC (358 aa).

The interval 1 to 101 is disordered; the sequence is MGAIHEETAN…VGSRRQEETG (101 aa). Residues 88–99 show a composition bias toward basic and acidic residues; sequence HRQEVGSRRQEE.

Belongs to the ParA family.

Functionally, this is one of the proteins encoded by the trfB operon; it is involved in plasmid maintenance and replication. The protein is Protein IncC (incC) of Escherichia coli.